Consider the following 122-residue polypeptide: Large ribosomal subunit protein uL14 (122 aa).

Belongs to the universal ribosomal protein uL14 family. Part of the 50S ribosomal subunit. Forms a cluster with proteins L3 and L19. In the 70S ribosome, L14 and L19 interact and together make contacts with the 16S rRNA in bridges B5 and B8.

In terms of biological role, binds to 23S rRNA. Forms part of two intersubunit bridges in the 70S ribosome. The protein is Large ribosomal subunit protein uL14 of Neisseria gonorrhoeae (strain ATCC 700825 / FA 1090).